Consider the following 353-residue polypeptide: Ribosomal RNA small subunit methyltransferase (353 aa).

Residues 1-10 (MAGGKIRKEK) show a composition bias toward basic residues. Residues 1–23 (MAGGKIRKEKPKASNRAPSNHYQ) form a disordered region. S-adenosyl-L-methionine-binding residues include H35, L37, G62, E83, D111, and N126. A disordered region spans residues 270 to 313 (ALNTTSMDLGDQSMGMEDDDNEMDDDDMEMDEGEGDGGETSEFK). Positions 285–308 (MEDDDNEMDDDDMEMDEGEGDGGE) are enriched in acidic residues.

This sequence belongs to the class I-like SAM-binding methyltransferase superfamily. rRNA adenine N(6)-methyltransferase family. In terms of tissue distribution, expressed in rapidly dividing tissues, including root meristems and lateral root primordia, developing cotyledons and leaves, petals, anther, pollen grains and silique abscission zone.

It localises to the nucleus. The protein localises to the nucleolus. The catalysed reaction is adenosine(1785)/adenosine(1786) in 18S rRNA + 4 S-adenosyl-L-methionine = N(6)-dimethyladenosine(1785)/N(6)-dimethyladenosine(1786) in 18S rRNA + 4 S-adenosyl-L-homocysteine + 4 H(+). Functionally, N6-adenine methyltransferase which modifies the AA dinucleotide at the plant nuclear 18S rRNA nucleotides A1785 and A1786. Required for generating appropriate patterns of gene expression during root development, including the cell-specific expression of transcriptional regulators involved in root hair and non-hair cells patterning. The polypeptide is Ribosomal RNA small subunit methyltransferase (Arabidopsis thaliana (Mouse-ear cress)).